Reading from the N-terminus, the 316-residue chain is tRNA dimethylallyltransferase (316 aa).

ATP is bound at residue 17–24 (GPTASGKT). 19–24 (TASGKT) contributes to the substrate binding site. Interaction with substrate tRNA stretches follow at residues 42 to 45 (DSAL), 166 to 170 (QRLSR), and 247 to 252 (RCVGYR).

The protein belongs to the IPP transferase family. Monomer. The cofactor is Mg(2+).

It carries out the reaction adenosine(37) in tRNA + dimethylallyl diphosphate = N(6)-dimethylallyladenosine(37) in tRNA + diphosphate. In terms of biological role, catalyzes the transfer of a dimethylallyl group onto the adenine at position 37 in tRNAs that read codons beginning with uridine, leading to the formation of N6-(dimethylallyl)adenosine (i(6)A). The sequence is that of tRNA dimethylallyltransferase from Salmonella paratyphi A (strain ATCC 9150 / SARB42).